Reading from the N-terminus, the 295-residue chain is Pyridoxal 5'-phosphate synthase subunit PdxS (295 aa).

Aspartate 25 lines the D-ribose 5-phosphate pocket. Residue lysine 82 is the Schiff-base intermediate with D-ribose 5-phosphate of the active site. Glycine 154 contacts D-ribose 5-phosphate. Arginine 166 is a binding site for D-glyceraldehyde 3-phosphate. Residues glycine 215 and 236–237 (GS) each bind D-ribose 5-phosphate.

It belongs to the PdxS/SNZ family. As to quaternary structure, in the presence of PdxT, forms a dodecamer of heterodimers.

It carries out the reaction aldehydo-D-ribose 5-phosphate + D-glyceraldehyde 3-phosphate + L-glutamine = pyridoxal 5'-phosphate + L-glutamate + phosphate + 3 H2O + H(+). It functions in the pathway cofactor biosynthesis; pyridoxal 5'-phosphate biosynthesis. Functionally, catalyzes the formation of pyridoxal 5'-phosphate from ribose 5-phosphate (RBP), glyceraldehyde 3-phosphate (G3P) and ammonia. The ammonia is provided by the PdxT subunit. Can also use ribulose 5-phosphate and dihydroxyacetone phosphate as substrates, resulting from enzyme-catalyzed isomerization of RBP and G3P, respectively. This is Pyridoxal 5'-phosphate synthase subunit PdxS from Bacillus anthracis (strain A0248).